The following is a 424-amino-acid chain: Histidine--tRNA ligase (424 aa).

Belongs to the class-II aminoacyl-tRNA synthetase family. In terms of assembly, homodimer.

The protein resides in the cytoplasm. It carries out the reaction tRNA(His) + L-histidine + ATP = L-histidyl-tRNA(His) + AMP + diphosphate + H(+). In Shewanella pealeana (strain ATCC 700345 / ANG-SQ1), this protein is Histidine--tRNA ligase.